The chain runs to 250 residues: MSVTMREMLEAGVHFGHQTRFWNPKMAPFIFGHRNKIHIINLEKSLPMFQEAQKFAKQLAANRGTILMVGTKRQARELVAEQAQRAGVPYVDQRWLGGMLTNFKTVKTSIKRLKDMKAQQEAGLESMSKKEQLMFSRELEKLEKDIGGIQDMAALPDAIFVIDVGYHKIAVSEAKKLGIPLIGVVDSNHSPEGIDYVIPGNDDSAKAVALYARGIADAILEGRANAVTEVAKAVAAEGSDEFVEVDENAA.

It belongs to the universal ribosomal protein uS2 family.

The chain is Small ribosomal subunit protein uS2 from Acidovorax sp. (strain JS42).